We begin with the raw amino-acid sequence, 34 residues long: Cycloamanide E proprotein (34 aa).

A propeptide spanning residues 1-10 is cleaved from the precursor; sequence MSDINAARLP. The cyclopeptide (Ser-Pro) cross-link spans 11–17; it reads SFFFPVP. Residues 18 to 34 constitute a propeptide that is removed on maturation; that stretch reads CISDDIEMVLTRGESLC.

This sequence belongs to the MSDIN fungal toxin family. Post-translationally, processed by the macrocyclase-peptidase enzyme POPB to yield a cyclic decapeptide. POPB first removes 10 residues from the N-terminus. Conformational trapping of the remaining peptide forces the enzyme to release this intermediate rather than proceed to macrocyclization. The enzyme rebinds the remaining peptide in a different conformation and catalyzes macrocyclization of the N-terminal 7 residues.

Cyclic heptapeptide that belongs to the MSDIN-like toxin family responsible for a large number of food poisoning cases and deaths. Cycloaminide E is structurally related to other cycloamanides that are non-toxic to mammals but show immunosuppressive activity. The polypeptide is Cycloamanide E proprotein (Amanita phalloides (Death cap)).